A 329-amino-acid chain; its full sequence is Beta-ketoacyl-[acyl-carrier-protein] synthase III (329 aa).

Residues Cys-113 and His-255 contribute to the active site. Residues Gln-256 to Arg-260 are ACP-binding. Residue Asn-285 is part of the active site.

It belongs to the thiolase-like superfamily. FabH family. As to quaternary structure, homodimer.

It localises to the cytoplasm. The catalysed reaction is malonyl-[ACP] + acetyl-CoA + H(+) = 3-oxobutanoyl-[ACP] + CO2 + CoA. Its pathway is lipid metabolism; fatty acid biosynthesis. Functionally, catalyzes the condensation reaction of fatty acid synthesis by the addition to an acyl acceptor of two carbons from malonyl-ACP. Catalyzes the first condensation reaction which initiates fatty acid synthesis and may therefore play a role in governing the total rate of fatty acid production. Possesses both acetoacetyl-ACP synthase and acetyl transacylase activities. Its substrate specificity determines the biosynthesis of branched-chain and/or straight-chain of fatty acids. This is Beta-ketoacyl-[acyl-carrier-protein] synthase III from Chlorobium phaeovibrioides (strain DSM 265 / 1930) (Prosthecochloris vibrioformis (strain DSM 265)).